The primary structure comprises 775 residues: Polyribonucleotide nucleotidyltransferase (775 aa).

Mg(2+) contacts are provided by D487 and D493. The KH domain maps to 554–613 (PKVEVVDVPEEKAPLIIGPGGSTVKKIYDETGVKVWVGEQGKVYLFVFPGGDVEKAKQMI). 2 S1 motif domains span residues 623–693 (GAVY…IGIE) and 707–775 (GDVY…TDDV).

This sequence belongs to the polyribonucleotide nucleotidyltransferase family. The cofactor is Mg(2+).

The protein localises to the cytoplasm. It catalyses the reaction RNA(n+1) + phosphate = RNA(n) + a ribonucleoside 5'-diphosphate. In terms of biological role, involved in mRNA degradation. Catalyzes the phosphorolysis of single-stranded polyribonucleotides processively in the 3'- to 5'-direction. The polypeptide is Polyribonucleotide nucleotidyltransferase (Aquifex aeolicus (strain VF5)).